A 318-amino-acid polypeptide reads, in one-letter code: Basic leucine zipper (bZIP) transcription factor atfB (318 aa).

Disordered stretches follow at residues 79–100 (LKNTHVRNGQPTPPPFDDKKLQ) and 114–164 (FNSS…EKRE). The tract at residues 160 to 199 (REKREKFLERNRLAASKCRQKKKEHTKLLETRFREVSSKK) is basic motif. The bZIP domain maps to 160 to 223 (REKREKFLER…LNLKNEMLRH (64 aa)). The leucine-zipper stretch occupies residues 202-216 (LESEIEHLRSEVLNL). Positions 247 to 304 (TPNRDLVSPMRSPEQMTASTPHGLSFGFDGPMQLPSEMGSPLDQRRDSEQSIMTESSY) are disordered.

It belongs to the bZIP family. ATF subfamily.

It localises to the nucleus. In terms of biological role, transcription factor that acts as a key player in the regulatory circuit that integrates secondary metabolism and cellular response to oxidative stress. Regulates the genes involved in development, stress response, and secondary metabolism through direct binding to their promoters. Particularly involved in the resistance to oxidative stress in asexual conidiospores. Binds aflatoxin gene promoters carrying the cAMP-response element (CRE1) under aflatoxin-inducing conditions. The polypeptide is Basic leucine zipper (bZIP) transcription factor atfB (Aspergillus parasiticus (strain ATCC 56775 / NRRL 5862 / SRRC 143 / SU-1)).